The primary structure comprises 182 residues: Transmembrane and coiled-coil domain-containing protein 2 (182 aa).

A run of 2 helical transmembrane segments spans residues 10–30 (IIID…TLLG) and 50–70 (VQVI…YALW). A coiled-coil region spans residues 122-149 (GLQEKILKKLQTVENKVKDLEGMIISQK).

It localises to the membrane. This Bos taurus (Bovine) protein is Transmembrane and coiled-coil domain-containing protein 2 (TMCO2).